A 216-amino-acid chain; its full sequence is GTP:AMP phosphotransferase, mitochondrial (216 aa).

GTP is bound at residue 15 to 20 (GSGKGT). Residues 35 to 64 (STGDILRQNIIKNTELGKKAKQYIAEGKLV) form an NMPbind region. Residues threonine 36, arginine 41, 62–64 (KLV), 89–92 (GFPR), and glutamine 96 each bind AMP. Residues 125–162 (NRWIHAPSGRVYNIGFKNPKVPGKDDVTGEPLMQREDD) are LID. Residues arginine 126 and 135–136 (VY) contribute to the GTP site. 2 residues coordinate AMP: arginine 159 and arginine 170. Threonine 199 contacts GTP.

The protein belongs to the adenylate kinase family. AK3 subfamily. Monomer. Ubiquitously expressed with highest levels expressed in the abdomen, suggesting a function in muscle tissues.

It is found in the mitochondrion matrix. It carries out the reaction a ribonucleoside 5'-triphosphate + AMP = a ribonucleoside 5'-diphosphate + ADP. In terms of biological role, involved in maintaining the homeostasis of cellular nucleotides by catalyzing the interconversion of nucleoside phosphates. Has GTP:AMP phosphotransferase and ITP:AMP phosphotransferase activities. The polypeptide is GTP:AMP phosphotransferase, mitochondrial (Drosophila melanogaster (Fruit fly)).